The primary structure comprises 226 residues: uncharacterized protein (226 aa).

4 helical membrane passes run A25–I45, F54–F74, E107–I127, and T153–S173.

Its subcellular location is the cell membrane. This is an uncharacterized protein from Mycoplasma genitalium (strain ATCC 33530 / DSM 19775 / NCTC 10195 / G37) (Mycoplasmoides genitalium).